Consider the following 365-residue polypeptide: U-box domain-containing protein 56 (365 aa).

The stretch at 176–281 forms a coiled coil; that stretch reads YEEQRRRLEI…ELLRALEKGE (106 aa). The 73-residue stretch at 293–365 folds into the U-box domain; that stretch reads EPPQCFICPI…AIKDWLQQHP (73 aa).

It carries out the reaction S-ubiquitinyl-[E2 ubiquitin-conjugating enzyme]-L-cysteine + [acceptor protein]-L-lysine = [E2 ubiquitin-conjugating enzyme]-L-cysteine + N(6)-ubiquitinyl-[acceptor protein]-L-lysine.. Its pathway is protein modification; protein ubiquitination. Functionally, functions as an E3 ubiquitin ligase. This is U-box domain-containing protein 56 (PUB56) from Arabidopsis thaliana (Mouse-ear cress).